The following is a 487-amino-acid chain: Calcium-dependent mitochondrial ATP-magnesium/phosphate carrier protein 2 (487 aa).

Topologically, residues 1 to 211 are mitochondrial intermembrane; the sequence is MEATKSSKQN…ISKHIKRSNY (211 aa). EF-hand domains lie at 36–71, 72–107, 108–138, and 139–174; these read ERDL…LQIP, SGYK…KELE, LYRI…AGIE, and IKDE…YPHE. Ca(2+)-binding residues include Asp-85, Asn-87, Asp-89, Arg-91, and Glu-96. Ca(2+) contacts are provided by Asp-152, Asp-154, Asp-156, and Glu-163. Solcar repeat units follow at residues 206-289, 301-389, and 400-483; these read IKRS…FKNA, IGTT…LKDL, and PGPL…MKKS. The chain crosses the membrane as a helical span at residues 212 to 229; sequence FIAGGIAGAASRTATAPL. Residues 230–263 lie on the Mitochondrial matrix side of the membrane; it reads DRLKVLLQIQKTDARIREAIKLIWKQGGVRGFFR. The helical transmembrane segment at 264 to 283 threads the bilayer; sequence GNGLNIVKVAPESAIKFYAY. Over 284 to 310 the chain is Mitochondrial intermembrane; it reads ELFKNAIGENMGEDKADIGTTVRLFAG. Residues 311–324 form a helical membrane-spanning segment; that stretch reads GMAGAVAQASIYPL. Topologically, residues 325–363 are mitochondrial matrix; that stretch reads DLVKTRLQTYTSQAGVAVPRLGTLTKDILVHEGPRAFYK. Residues 364–383 traverse the membrane as a helical segment; it reads GLFPSLLGIIPYAGIDLAAY. The Mitochondrial intermembrane segment spans residues 384–405; that stretch reads ETLKDLSRTYILQDAEPGPLVQ. A helical membrane pass occupies residues 406–423; the sequence is LGCGTISGALGATCVYPL. Over 424–457 the chain is Mitochondrial matrix; that stretch reads QVVRTRMQAERARTSMSGVFRRTISEEGYRALYK. A helical transmembrane segment spans residues 458 to 477; sequence GLLPNLLKVVPAASITYMVY. The Mitochondrial intermembrane segment spans residues 478-487; sequence EAMKKSLELD.

This sequence belongs to the mitochondrial carrier (TC 2.A.29) family. Expressed in flowers, leaves, stems, roots and seedlings, mostly in aerial parts.

Its subcellular location is the mitochondrion inner membrane. Its activity is regulated as follows. Counter-exchange transport activity is saturable and inhibited by pyridoxal-5'-phosphate, EDTA and EGTA. Activated by calcium Ca(2+) and manganese Mn(2+) ions, and slightly by iron Fe(2+) and zinc Zn(2+) ions. Repressed by copper ions Cu(2+) and slightly by magnesium Mg(2+) ions. Magnesium Mg(2+) ions promotes slightly ATP uptake, ATP-Mg(2+) being exchanged with ATP(4-). In terms of biological role, calcium-dependent mitochondrial carrier protein that catalyzes the import of ATP co-transported with metal divalent cations across the mitochondrial inner membrane in exchange for phosphate (Pi). Can transport phosphate, AMP, ADP, ATP, adenosine 5'-phosphosulfate, sulfate and thiosulfate, and, to a lesser extent, other nucleotides. Binds calcium ions Ca(2+). Also mediates calcium uptake. The chain is Calcium-dependent mitochondrial ATP-magnesium/phosphate carrier protein 2 from Arabidopsis thaliana (Mouse-ear cress).